The following is a 267-amino-acid chain: uncharacterized protein (267 aa).

A helical transmembrane segment spans residues 30–52 (FMRIFLLFLFFVLFTFGVEGYVI).

It is found in the membrane. This is an uncharacterized protein from Aquifex aeolicus (strain VF5).